A 341-amino-acid chain; its full sequence is Basic membrane protein B (341 aa).

An N-terminal signal peptide occupies residues 1–14 (MRIVIFILGILLTS). Residue Cys15 is the site of N-palmitoyl cysteine attachment. A lipid anchor (S-diacylglycerol cysteine) is attached at Cys15.

This sequence belongs to the BMP lipoprotein family. In terms of assembly, monomer.

Its subcellular location is the cell inner membrane. May be part of an ABC-type nucleoside uptake system involved in the purine salvage pathway. The polypeptide is Basic membrane protein B (bmpB) (Borrelia garinii subsp. bavariensis (strain ATCC BAA-2496 / DSM 23469 / PBi) (Borreliella bavariensis)).